We begin with the raw amino-acid sequence, 284 residues long: MRSEQEMMDIFLDFALNDERIRLVTLEGSRTNRNIPPDNFQDYDISYFVTDVESFKENDQWLEIFGKRIMMQKPEDMELFPPELGNWFSYIILFEDGNKLDLTLIPIREAEDYFANNDGLVKVLLDKDSFINYKVTPNDRQYWIKRPTAREFDDCCNEFWMVSTYVVKGLARNEILFAIDHLNEIVRPNLLRMMAWHIASQKGYSFSMGKNYKFMKRYLSNKEWEELMSTYSVNGYQEMWKSLFTCYALFRKYSKAVSEGLAYKYPDYDEGITKYTEGIYCSVK.

Homodimer.

The protein resides in the cytoplasm. The catalysed reaction is streptomycin + ATP = 6-O-adenylylstreptomycin + diphosphate. The enzyme catalyses streptomycin + GTP = 6-O-guanylylstreptomycin + diphosphate. It catalyses the reaction streptidine + ATP = 6-O-adenylylstreptidine + diphosphate. In terms of biological role, mediates bacterial resistance to streptomycin. Adenylates streptomycin on the O-6 residue. Adenylates streptidine on the O-6 residue. Does not act on spectinomycin, neomycin-B or kanamycin. Specific for ATP and GTP nucleotides incorporating a purine ring. No reaction with CTP or UTP. This is Aminoglycoside 6-adenylyltransferase from Bacillus subtilis (strain 168).